The sequence spans 343 residues: Ribosomal RNA small subunit methyltransferase C (343 aa).

The protein belongs to the methyltransferase superfamily. RsmC family. In terms of assembly, monomer.

It localises to the cytoplasm. The enzyme catalyses guanosine(1207) in 16S rRNA + S-adenosyl-L-methionine = N(2)-methylguanosine(1207) in 16S rRNA + S-adenosyl-L-homocysteine + H(+). Specifically methylates the guanine in position 1207 of 16S rRNA in the 30S particle. The sequence is that of Ribosomal RNA small subunit methyltransferase C from Shewanella sediminis (strain HAW-EB3).